Here is a 228-residue protein sequence, read N- to C-terminus: 7-cyano-7-deazaguanine synthase (228 aa).

8-18 (LSGGLDSTTCL) serves as a coordination point for ATP. Cys188, Cys198, Cys201, and Cys204 together coordinate Zn(2+).

Belongs to the QueC family. The cofactor is Zn(2+).

The catalysed reaction is 7-carboxy-7-deazaguanine + NH4(+) + ATP = 7-cyano-7-deazaguanine + ADP + phosphate + H2O + H(+). The protein operates within purine metabolism; 7-cyano-7-deazaguanine biosynthesis. Functionally, catalyzes the ATP-dependent conversion of 7-carboxy-7-deazaguanine (CDG) to 7-cyano-7-deazaguanine (preQ(0)). In Legionella pneumophila (strain Paris), this protein is 7-cyano-7-deazaguanine synthase.